The sequence spans 150 residues: UPF0756 membrane protein NT05HA_0561 (150 aa).

The next 4 helical transmembrane spans lie at 1–21 (MSLQFNMIALLLVILILLGIF), 52–72 (YGLSIGIVILTIGVLSPLVSG), 81–101 (AFVSWKMFVAIAVGVFVAWLA), and 128–148 (FLGGIPVGPLIAAGILAVLIG).

This sequence belongs to the UPF0756 family.

The protein resides in the cell membrane. The chain is UPF0756 membrane protein NT05HA_0561 from Aggregatibacter aphrophilus (strain NJ8700) (Haemophilus aphrophilus).